Reading from the N-terminus, the 339-residue chain is NADPH dehydrogenase (339 aa).

21–24 provides a ligand contact to FMN; that stretch reads PPMC. Position 26 (Tyr26) interacts with substrate. Residues Ala57 and Gln99 each contribute to the FMN site. 162–165 is a binding site for substrate; the sequence is HGAH. FMN contacts are provided by residues Arg215 and 307 to 308; that span reads GR.

This sequence belongs to the NADH:flavin oxidoreductase/NADH oxidase family. NamA subfamily. As to quaternary structure, homotetramer. The cofactor is FMN.

It carries out the reaction A + NADPH + H(+) = AH2 + NADP(+). Its function is as follows. Catalyzes the reduction of the double bond of an array of alpha,beta-unsaturated aldehydes and ketones. It also reduces the nitro group of nitroester and nitroaromatic compounds. It could have a role in detoxification processes. The sequence is that of NADPH dehydrogenase from Clostridium acetobutylicum (strain ATCC 824 / DSM 792 / JCM 1419 / IAM 19013 / LMG 5710 / NBRC 13948 / NRRL B-527 / VKM B-1787 / 2291 / W).